The primary structure comprises 299 residues: Serine/threonine-protein kinase 1 (299 aa).

Residues 39–277 (IATKPMFEGG…FKGLVSHPWF (239 aa)) enclose the Protein kinase domain. ATP-binding positions include 45 to 53 (FEGGRRNNV) and lysine 66. Catalysis depends on aspartate 153, which acts as the Proton acceptor.

The protein belongs to the protein kinase superfamily. Ser/Thr protein kinase family.

Its subcellular location is the virion. The protein resides in the host cytoplasm. The enzyme catalyses L-seryl-[protein] + ATP = O-phospho-L-seryl-[protein] + ADP + H(+). It carries out the reaction L-threonyl-[protein] + ATP = O-phospho-L-threonyl-[protein] + ADP + H(+). Essential for viral replication. It may mediate the virus progression through DNA replication. The chain is Serine/threonine-protein kinase 1 from African swine fever virus (isolate Tick/Malawi/Lil 20-1/1983) (ASFV).